We begin with the raw amino-acid sequence, 347 residues long: S-adenosylmethionine:tRNA ribosyltransferase-isomerase (347 aa).

This sequence belongs to the QueA family. As to quaternary structure, monomer.

The protein resides in the cytoplasm. It carries out the reaction 7-aminomethyl-7-carbaguanosine(34) in tRNA + S-adenosyl-L-methionine = epoxyqueuosine(34) in tRNA + adenine + L-methionine + 2 H(+). It participates in tRNA modification; tRNA-queuosine biosynthesis. Functionally, transfers and isomerizes the ribose moiety from AdoMet to the 7-aminomethyl group of 7-deazaguanine (preQ1-tRNA) to give epoxyqueuosine (oQ-tRNA). The sequence is that of S-adenosylmethionine:tRNA ribosyltransferase-isomerase from Streptococcus thermophilus (strain ATCC BAA-491 / LMD-9).